Reading from the N-terminus, the 238-residue chain is MAVVTLSEMMEAGAHFGHQTRRWNPKMSRYIYCARNGVHIIDLVKTAVCMNNAYKWTRNAAKSGKRFLFVGTKKQASEVVAQEAARCGASYVNQRWLGGMLTNWTTMKARIDRLKDLERMESSGAIAMRPKKEASVLRHELERLQKYLGGLKGMKRLPDVVVLVDQRRETNAVLEARKLDIPLVSMLDTNCDPDLCEVPIPCNDDAVRSVQLVLGRIADAINEGRHGSNDQRARQKYS.

This sequence belongs to the universal ribosomal protein uS2 family.

This chain is Small ribosomal subunit protein uS2, found in Prochlorococcus marinus (strain SARG / CCMP1375 / SS120).